Here is a 113-residue protein sequence, read N- to C-terminus: Retrotransposon Gag-like protein 8C (113 aa).

This sequence belongs to the FAM127 family.

The polypeptide is Retrotransposon Gag-like protein 8C (Homo sapiens (Human)).